Here is a 178-residue protein sequence, read N- to C-terminus: Inorganic pyrophosphatase (178 aa).

Residues Lys-30, Arg-44, and Tyr-56 each contribute to the substrate site. Mg(2+) is bound by residues Asp-66, Asp-71, and Asp-103. Tyr-140 lines the substrate pocket.

The protein belongs to the PPase family. Homohexamer. The cofactor is Mg(2+).

The protein localises to the cytoplasm. It catalyses the reaction diphosphate + H2O = 2 phosphate + H(+). In terms of biological role, catalyzes the hydrolysis of inorganic pyrophosphate (PPi) forming two phosphate ions. This chain is Inorganic pyrophosphatase, found in Pyrococcus horikoshii (strain ATCC 700860 / DSM 12428 / JCM 9974 / NBRC 100139 / OT-3).